A 559-amino-acid polypeptide reads, in one-letter code: Formate--tetrahydrofolate ligase (559 aa).

Thr68 to Thr75 is an ATP binding site.

Belongs to the formate--tetrahydrofolate ligase family.

The catalysed reaction is (6S)-5,6,7,8-tetrahydrofolate + formate + ATP = (6R)-10-formyltetrahydrofolate + ADP + phosphate. Its pathway is one-carbon metabolism; tetrahydrofolate interconversion. This chain is Formate--tetrahydrofolate ligase, found in Rhizobium etli (strain CIAT 652).